The sequence spans 253 residues: Homeobox protein EMX2 (253 aa).

A DNA-binding region (homeobox) is located at residues 155–214 (PKRIRTAFSPSQLLRLEHAFEKNHYVVGAERKQLAHSLSLTETQVKVWFQNRRTKFKRQK). Residues 213 to 253 (QKLEEEGSDSQQKKKGTHHINRWRIATKQASPEEIDVTSDD) form a disordered region. Residues 225–234 (KKKGTHHINR) show a composition bias toward basic residues.

Belongs to the EMX homeobox family. As to quaternary structure, interacts with translation initiation factor EIF4E.

It localises to the nucleus. Its subcellular location is the cell projection. It is found in the axon. Functionally, transcription factor, which in cooperation with EMX1, acts to generate the boundary between the roof and archipallium in the developing brain. May function in combination with OTX1/2 to specify cell fates in the developing central nervous system. In the inner ear, it controls the distribution of GPR156 at hair cell boundaries, and regulates the organization of stereociliary bundles in opposite orientations across the line of polarity reversal (LPR). The chain is Homeobox protein EMX2 (EMX2) from Bos taurus (Bovine).